Reading from the N-terminus, the 428-residue chain is Serine--tRNA ligase (428 aa).

Threonine 233–glutamate 235 is a binding site for L-serine. Residue arginine 264–glutamate 266 coordinates ATP. Glutamate 287 contacts L-serine. Glutamate 351–serine 354 is a binding site for ATP. Serine 387 is an L-serine binding site.

The protein belongs to the class-II aminoacyl-tRNA synthetase family. Type-1 seryl-tRNA synthetase subfamily. As to quaternary structure, homodimer. The tRNA molecule binds across the dimer.

It is found in the cytoplasm. It carries out the reaction tRNA(Ser) + L-serine + ATP = L-seryl-tRNA(Ser) + AMP + diphosphate + H(+). It catalyses the reaction tRNA(Sec) + L-serine + ATP = L-seryl-tRNA(Sec) + AMP + diphosphate + H(+). Its pathway is aminoacyl-tRNA biosynthesis; selenocysteinyl-tRNA(Sec) biosynthesis; L-seryl-tRNA(Sec) from L-serine and tRNA(Sec): step 1/1. In terms of biological role, catalyzes the attachment of serine to tRNA(Ser). Is also able to aminoacylate tRNA(Sec) with serine, to form the misacylated tRNA L-seryl-tRNA(Sec), which will be further converted into selenocysteinyl-tRNA(Sec). In Salinibacter ruber (strain DSM 13855 / M31), this protein is Serine--tRNA ligase.